Here is a 101-residue protein sequence, read N- to C-terminus: Protein S100-A4 (101 aa).

N-acetylalanine is present on Ala-2. An N6-acetyllysine modification is found at Lys-7. 2 EF-hand domains span residues 12–47 (MVST…SFLG) and 50–85 (TDEA…IAMM). Ca(2+)-binding residues include Lys-28 and Glu-33. Lys-35 bears the N6-acetyllysine mark. 5 residues coordinate Ca(2+): Asp-63, Asn-65, Asp-67, Glu-69, and Glu-74.

It belongs to the S-100 family. Homodimer. Interacts with PPFIBP1 in a calcium-dependent mode. Interacts with PGLYRP1; this complex acts as a chemoattractant that promotes lymphocyte movement. Interacts with MYH9; this interaction increases cell motility. Interacts with Annexin 2/ANXA2. Interacts with TP53; this interaction promotes TP53 degradation. Interacts with CCR5. Interacts with FCGR3A; this interaction inhibits PKC-dependent phosphorylation of FCGR3A. In terms of tissue distribution, ubiquitously expressed.

Its subcellular location is the secreted. It is found in the nucleus. It localises to the cytoplasm. Calcium-binding protein that plays a role in various cellular processes including motility, angiogenesis, cell differentiation, apoptosis, and autophagy. Increases cell motility and invasiveness by interacting with non-muscle myosin heavy chain (NMMHC) IIA/MYH9. Mechanistically, promotes filament depolymerization and increases the amount of soluble myosin-IIA, resulting in the formation of stable protrusions facilitating chemotaxis. Also modulates the pro-apoptotic function of TP53 by binding to its C-terminal transactivation domain within the nucleus and reducing its protein levels. Within the extracellular space, stimulates cytokine production including granulocyte colony-stimulating factor and CCL24 from T-lymphocytes. In addition, stimulates T-lymphocyte chemotaxis by acting as a chemoattractant complex with PGLYRP1 that promotes lymphocyte migration via CCR5 and CXCR3 receptors. The sequence is that of Protein S100-A4 (S100A4) from Homo sapiens (Human).